The sequence spans 95 residues: Small ribosomal subunit protein bS6 (95 aa).

This sequence belongs to the bacterial ribosomal protein bS6 family.

Functionally, binds together with bS18 to 16S ribosomal RNA. The protein is Small ribosomal subunit protein bS6 of Bacillus velezensis (strain DSM 23117 / BGSC 10A6 / LMG 26770 / FZB42) (Bacillus amyloliquefaciens subsp. plantarum).